Reading from the N-terminus, the 59-residue chain is Mu-conotoxin SrVA (59 aa).

The first 22 residues, 1–22, serve as a signal peptide directing secretion; that stretch reads MRCLPVFVILLLLIASAPSVDA. The propeptide occupies 23 to 44; it reads QLKTKDDVPLASFHDNAKGTQH. 2 disulfide bridges follow: cysteine 51/cysteine 58 and cysteine 52/cysteine 59.

Belongs to the conotoxin T superfamily. Expressed by the venom duct.

It localises to the secreted. Its function is as follows. Mu-conotoxins block voltage-gated sodium channels. This peptide inhibits the cardiac sodium channel hNav1.5/SCN5A (33% inhibition at 200 nM, 50% at 400 nM, and 55% at 600 nM). Does not interfere with the voltage-dependence of activation, but affects the voltage-dependence of inactivation of hNav1.5. In vivo, intracranial injection into 9-day-old mice causes transient symptoms, including extension of the body and clockwise and counter-clockwise turns, that last 3 to 4 minutes. Intracranial injection into 16-day-old mice, causes transient symptoms, including agitated breathing and occasional turning followed by scratching and grooming behavior, that last for 15-19 minutes. This chain is Mu-conotoxin SrVA, found in Conus spurius (Alphabet cone).